Consider the following 434-residue polypeptide: Histidinol dehydrogenase (434 aa).

Residues Y130, Q188, and N211 each coordinate NAD(+). Positions 237, 259, and 262 each coordinate substrate. Zn(2+) is bound by residues Q259 and H262. Catalysis depends on proton acceptor residues E326 and H327. Residues H327, D360, E414, and H419 each coordinate substrate. Residue D360 coordinates Zn(2+). H419 is a Zn(2+) binding site.

The protein belongs to the histidinol dehydrogenase family. In terms of assembly, homodimer. The cofactor is Zn(2+).

The enzyme catalyses L-histidinol + 2 NAD(+) + H2O = L-histidine + 2 NADH + 3 H(+). The protein operates within amino-acid biosynthesis; L-histidine biosynthesis; L-histidine from 5-phospho-alpha-D-ribose 1-diphosphate: step 9/9. Its function is as follows. Catalyzes the sequential NAD-dependent oxidations of L-histidinol to L-histidinaldehyde and then to L-histidine. This is Histidinol dehydrogenase from Shigella dysenteriae serotype 1 (strain Sd197).